Consider the following 675-residue polypeptide: L-type lectin-domain containing receptor kinase IV.1 (675 aa).

Positions 1–22 (MFLKLLTIFFFFFFNLIFQSSS) are cleaved as a signal peptide. At 23 to 291 (QSLNFAYNNG…EPKRISEFYK (269 aa)) the chain is on the extracellular side. The legume-lectin like stretch occupies residues 25–261 (LNFAYNNGFN…SEHYILGWSF (237 aa)). N-linked (GlcNAc...) asparagine glycosylation is found at asparagine 57, asparagine 79, asparagine 112, asparagine 134, asparagine 153, and asparagine 186. A helical transmembrane segment spans residues 292-312 (IGMPLISLFLIFSFIFLVCYI). The Cytoplasmic portion of the chain corresponds to 313-675 (VRRRRKFAEE…IADSQLSGGR (363 aa)). One can recognise a Protein kinase domain in the interval 347–624 (FKEKGLLGTG…LHYLRGDAKL (278 aa)). ATP contacts are provided by residues 353–361 (LGTGGFGSV) and lysine 376. The active-site Proton acceptor is the aspartate 472.

In the C-terminal section; belongs to the protein kinase superfamily. Ser/Thr protein kinase family. The protein in the N-terminal section; belongs to the leguminous lectin family.

It localises to the membrane. The enzyme catalyses L-seryl-[protein] + ATP = O-phospho-L-seryl-[protein] + ADP + H(+). The catalysed reaction is L-threonyl-[protein] + ATP = O-phospho-L-threonyl-[protein] + ADP + H(+). This is L-type lectin-domain containing receptor kinase IV.1 (LECRK41) from Arabidopsis thaliana (Mouse-ear cress).